The primary structure comprises 2800 residues: Probable serine/threonine-protein kinase roco5 (2800 aa).

Residues 1-61 (MEVIKKEKKD…EKEKDKEKDG (61 aa)) are compositionally biased toward basic and acidic residues. Disordered stretches follow at residues 1 to 92 (MEVI…SAQS), 123 to 225 (TTTT…SPVD), and 417 to 437 (GINSANSNNNNNNSGGGSSGI). Residues 77–86 (PTPPPPPPPS) are compositionally biased toward pro residues. 2 stretches are compositionally biased toward low complexity: residues 123–134 (TTTTTTTTSSNN) and 143–170 (NNNTSNNNINNNNKTSNTTGSNVSSSNN). Positions 176 to 190 (INVTSLDSGGNNNAS) are enriched in polar residues. Over residues 194 to 218 (ISNEHSPKNRKEKEKEKDKDNKEDS) the composition is skewed to basic and acidic residues. A DH domain is found at 227–508 (NRRKLVEGFM…VQVVKDIVNE (282 aa)). The segment covering 417–429 (GINSANSNNNNNN) has biased composition (low complexity). The PH domain occupies 540–649 (KFLKEGILIE…WFQVLSQASL (110 aa)). LRR repeat units lie at residues 777–800 (NKSITHLTLSQNSINDPCAVALGD), 805–832 (NHSLIQMDLSENTIADKGLISLIDGILS), 834–856 (PSITVVILTQNQITDTGAKHISK), and 861–885 (NQTLNALFLEDNNITQSMGAEIIDQ). The interval 926–946 (KQLQVNQKSTTPSTSTSTTSS) is disordered. Positions 934 to 946 (STTPSTSTSTTSS) are enriched in low complexity. LRR repeat units lie at residues 971 to 984 (LNKLNMLSLDSRRI), 985 to 1007 (SDLKELYLDHNCISSIPVSILKE), 1008 to 1031 (LKNLQILDLSNNQLSSLPSEISEM), 1033 to 1056 (ELKLLNVSHNNLSSLPIELGTLCK), 1058 to 1077 (NHLDISFNFIETINVNSLSQ), 1078 to 1101 (LVNLKVLMMQRNYFNRLPIEIFTR), 1128 to 1151 (AIKATKLDLSDCGLSALPIEIGSI), 1152 to 1174 (SSLIELDLTNNRIKDLPPQIGKL), 1175 to 1197 (SSLQTLNLSNNAIESLPWQLSQL), and 1199 to 1222 (TLKVLNITGNPISFDGASNAKISI). The 221-residue stretch at 1244–1464 (KEKPCMRMKL…NHIVKLGKAE (221 aa)) folds into the Roc domain. GTP-binding positions include 1257–1264 (GQENVGKT), 1348–1352 (DFAGQ), and 1407–1410 (THLD). Residues 1473-1604 (RSYFQLENLI…KFEIVHPLPD (132 aa)) form the COR 1 domain. Disordered stretches follow at residues 1605 to 1665 (PKAT…SLLN) and 1688 to 1711 (DQSTSPSNSTTPSPNTSSNNFSDS). Low complexity-rich tracts occupy residues 1610 to 1645 (SSSSSSPSTTQKSLNNSGSNLKSSGSAISTSSSSTT), 1653 to 1665 (RTNSTTNTTSLLN), and 1688 to 1707 (DQSTSPSNSTTPSPNTSSNN). A COR 2 domain is found at 1717–1790 (KSSTKHLVPI…VKEFWKNGLL (74 aa)). A compositionally biased stretch (low complexity) spans 1886-2008 (SQQQHHQQQQ…LNPDSTSSSN (123 aa)). Disordered stretches follow at residues 1886 to 2011 (SQQQ…NETS) and 2050 to 2070 (RNTNKPKINGTTGSGSSSSIV). Residues 2050 to 2059 (RNTNKPKING) are compositionally biased toward polar residues. The Protein kinase domain maps to 2175–2440 (LEIIEKVGEG…PTFIDIHSRL (266 aa)). ATP is bound by residues 2181–2189 (VGEGGFGIV) and lysine 2202. Aspartate 2300 functions as the Proton acceptor in the catalytic mechanism. Composition is skewed to low complexity over residues 2452-2490 (TTTNSAKSTISTGFNSNSGATTTTKPKSSTISSGSGTTS), 2583-2654 (LKTP…SPIS), 2669-2685 (TTQTTSTPPTNQTPNPT), and 2694-2704 (SSLSSNSINKP). Disordered regions lie at residues 2452-2498 (TTTN…HPQL) and 2544-2800 (AGGN…AIPK). Residues 2705 to 2723 (PSKPLPTPGGVTSPPPPPT) show a composition bias toward pro residues. The segment covering 2730 to 2756 (IKFNSISAGNKTIGQSSTLPSSTLKQF) has biased composition (polar residues). Over residues 2757 to 2787 (TANNNTSPSGSSSLPNSTVSSPSSSFLLRPT) the composition is skewed to low complexity.

Belongs to the protein kinase superfamily. TKL Ser/Thr protein kinase family. ROCO subfamily.

It catalyses the reaction L-seryl-[protein] + ATP = O-phospho-L-seryl-[protein] + ADP + H(+). The catalysed reaction is L-threonyl-[protein] + ATP = O-phospho-L-threonyl-[protein] + ADP + H(+). Functionally, may act as a serine/threonine-protein kinase and guanine-nucleotide releasing factor. This Dictyostelium discoideum (Social amoeba) protein is Probable serine/threonine-protein kinase roco5 (roco5).